A 296-amino-acid polypeptide reads, in one-letter code: Pantothenate synthetase (296 aa).

Residue 37–44 (MGALHTGH) participates in ATP binding. H44 (proton donor) is an active-site residue. Q68 serves as a coordination point for (R)-pantoate. Residue Q68 participates in beta-alanine binding. Residue 160 to 163 (GQKD) participates in ATP binding. Q166 serves as a coordination point for (R)-pantoate. ATP-binding positions include V189 and 197-200 (TSSR).

The protein belongs to the pantothenate synthetase family. In terms of assembly, homodimer.

It is found in the cytoplasm. The catalysed reaction is (R)-pantoate + beta-alanine + ATP = (R)-pantothenate + AMP + diphosphate + H(+). It participates in cofactor biosynthesis; (R)-pantothenate biosynthesis; (R)-pantothenate from (R)-pantoate and beta-alanine: step 1/1. Catalyzes the condensation of pantoate with beta-alanine in an ATP-dependent reaction via a pantoyl-adenylate intermediate. This is Pantothenate synthetase from Thermobifida fusca (strain YX).